We begin with the raw amino-acid sequence, 87 residues long: Small ribosomal subunit protein bS20 (87 aa).

Positions 1-20 are disordered; it reads MANSAQARKRARTALKQRAH. Residues 7–19 show a composition bias toward basic residues; it reads ARKRARTALKQRA.

It belongs to the bacterial ribosomal protein bS20 family.

Its function is as follows. Binds directly to 16S ribosomal RNA. This is Small ribosomal subunit protein bS20 from Chromobacterium violaceum (strain ATCC 12472 / DSM 30191 / JCM 1249 / CCUG 213 / NBRC 12614 / NCIMB 9131 / NCTC 9757 / MK).